The sequence spans 519 residues: GTPase Der (519 aa).

Acidic residues-rich tracts occupy residues 1–12 (MDVEGAFADEEE) and 30–54 (GYEDSDDDFDAEDFDETEFSNPDFG). A disordered region spans residues 1–54 (MDVEGAFADEEELAPHGGWASADFDPAEFGYEDSDDDFDAEDFDETEFSNPDFG). 2 consecutive EngA-type G domains span residues 81 to 244 (CTVA…PEEP) and 254 to 427 (RRVA…DNWD). GTP-binding positions include 87–94 (GRPNVGKS), 134–138 (DTGGW), 196–199 (NKFD), 260–267 (GKPNVGKS), 307–311 (DTAGL), and 372–375 (NKWD). Positions 428 to 510 (RRISTGQLNT…PVRIAVRVRE (83 aa)) constitute a KH-like domain.

This sequence belongs to the TRAFAC class TrmE-Era-EngA-EngB-Septin-like GTPase superfamily. EngA (Der) GTPase family. Associates with the 50S ribosomal subunit.

In terms of biological role, GTPase that plays an essential role in the late steps of ribosome biogenesis. The chain is GTPase Der from Corynebacterium glutamicum (strain ATCC 13032 / DSM 20300 / JCM 1318 / BCRC 11384 / CCUG 27702 / LMG 3730 / NBRC 12168 / NCIMB 10025 / NRRL B-2784 / 534).